Consider the following 37-residue polypeptide: Large ribosomal subunit protein bL36 (37 aa).

The protein belongs to the bacterial ribosomal protein bL36 family.

The polypeptide is Large ribosomal subunit protein bL36 (rpmJ) (Fusobacterium nucleatum subsp. nucleatum (strain ATCC 25586 / DSM 15643 / BCRC 10681 / CIP 101130 / JCM 8532 / KCTC 2640 / LMG 13131 / VPI 4355)).